The sequence spans 370 residues: Adaptive-response sensory kinase SasA (370 aa).

Residues 152 to 365 (MVAHELRTPL…CFYLTVPVWQ (214 aa)) form the Histidine kinase domain. H155 carries the phosphohistidine; by autocatalysis modification.

In terms of assembly, homooligomerizes. Interacts with KaiC. Participates in the KaiBC complex, whose core is composed of a KaiC homohexamer and 6 KaiB.

It catalyses the reaction ATP + protein L-histidine = ADP + protein N-phospho-L-histidine.. Its function is as follows. Member of the two-component regulatory system SasA/RpaA involved in genome-wide circadian gene expression. One of several clock output pathways. Participates in the Kai clock protein complex, the main circadian regulator in cyanobacteria, via its interaction with KaiC. KaiC enhances the autophosphorylation activity of SasA, which then transfers its phosphate group to RpaA to activate it. In addition to its output function, recruits fold-shifted KaiB (KaiB(fs)) to KaiC to cooperatively form the KaiB(6):KaiC(6) complex (independent of SasA kinase activity). Required for robustness of the circadian rhythm of gene expression and is involved in clock output, also required for adaptation to light/dark cycles. In Prochlorococcus marinus (strain MIT 9313), this protein is Adaptive-response sensory kinase SasA.